A 574-amino-acid polypeptide reads, in one-letter code: Glutamyl-tRNA(Gln) amidotransferase subunit B, mitochondrial (574 aa).

Residues 1-12 constitute a mitochondrion transit peptide; the sequence is MIRQFVSHRGIP. A disordered region spans residues 34–62; sequence PLGRKNWSTSDEAKSKRAAMRKGGAPPPE.

It belongs to the GatB/GatE family. GatB subfamily. In terms of assembly, subunit of the heterotrimeric GatCAB amidotransferase (AdT) complex, composed of A, B and C subunits.

The protein localises to the mitochondrion. It catalyses the reaction L-glutamyl-tRNA(Gln) + L-glutamine + ATP + H2O = L-glutaminyl-tRNA(Gln) + L-glutamate + ADP + phosphate + H(+). Functionally, allows the formation of correctly charged Gln-tRNA(Gln) through the transamidation of misacylated Glu-tRNA(Gln) in the mitochondria. The reaction takes place in the presence of glutamine and ATP through an activated gamma-phospho-Glu-tRNA(Gln). The sequence is that of Glutamyl-tRNA(Gln) amidotransferase subunit B, mitochondrial from Ajellomyces capsulatus (strain H143) (Darling's disease fungus).